Reading from the N-terminus, the 21-residue chain is Complement receptor 3-related protein (21 aa).

The protein resides in the secreted. Plays a role in adherence of C.albicans to buccal epithelial cells, and in biofilm formation. This chain is Complement receptor 3-related protein, found in Candida albicans (Yeast).